A 272-amino-acid chain; its full sequence is NH(3)-dependent NAD(+) synthetase (272 aa).

45-52 contacts ATP; it reads GISGGQDS. Mg(2+) is bound at residue Asp51. Arg138 provides a ligand contact to deamido-NAD(+). Thr158 is a binding site for ATP. Glu163 contacts Mg(2+). Deamido-NAD(+) contacts are provided by Lys171 and Asp178. Positions 187 and 209 each coordinate ATP. 258-259 lines the deamido-NAD(+) pocket; sequence HK.

Belongs to the NAD synthetase family. As to quaternary structure, homodimer.

The enzyme catalyses deamido-NAD(+) + NH4(+) + ATP = AMP + diphosphate + NAD(+) + H(+). It participates in cofactor biosynthesis; NAD(+) biosynthesis; NAD(+) from deamido-NAD(+) (ammonia route): step 1/1. Its function is as follows. Catalyzes the ATP-dependent amidation of deamido-NAD to form NAD. Uses ammonia as a nitrogen source. This chain is NH(3)-dependent NAD(+) synthetase, found in Bacillus cereus (strain AH187).